Here is a 303-residue protein sequence, read N- to C-terminus: Recombination-associated protein RdgC (303 aa).

The protein belongs to the RdgC family.

It localises to the cytoplasm. It is found in the nucleoid. In terms of biological role, may be involved in recombination. This Shewanella frigidimarina (strain NCIMB 400) protein is Recombination-associated protein RdgC.